The sequence spans 885 residues: Sensor histidine kinase KdpD (885 aa).

The next 4 helical transmembrane spans lie at 384–404 (AIDMLKMILIQIICVMMGLWI), 415–435 (IILMIFLIGIILLSIWTRSFI), 436–456 (IGFLAAIINVFVFNYFFTEPR), and 464–484 (FDYPITFIVSILTSILTSALL). In terms of domain architecture, Histidine kinase spans 660–880 (SISHDIRTPL…IFYFNIYTDF (221 aa)). Position 663 is a phosphohistidine; by autocatalysis (histidine 663).

Its subcellular location is the membrane. It catalyses the reaction ATP + protein L-histidine = ADP + protein N-phospho-L-histidine.. Cyclic di-AMP is a negative regulator of the Kdp system. Its function is as follows. Member of the two-component regulatory system KdpD/KdpE that regulates the transcription of a series of virulence factors through sensing external K(+) concentrations. Also regulates capsular polysaccharide production. May function as a membrane-associated protein kinase that phosphorylates KdpE in response to environmental signals. In turn, KpdE functions as a transcriptional regulator by direct binding to promoter regions of target genes including spa, hla, aur and geh. The polypeptide is Sensor histidine kinase KdpD (Staphylococcus aureus (strain NCTC 8325 / PS 47)).